The primary structure comprises 655 residues: E3 ubiquitin-protein ligase TRIM32 (655 aa).

The RING-type zinc-finger motif lies at 21–66 (CPICMESFTEEQLRPKLLHCGHTICRQCLEKLLASSINGVRCPFCS). At Ser-56 the chain carries Phosphoserine; by CHEK2. The segment at 96–139 (VGLLMCRGCGRRLPRQFCRSCGVVLCEPCREADHQPPGHCTLPV) adopts a B box-type; atypical zinc-finger fold. Residues Cys-101, Cys-104, Cys-124, and His-129 each contribute to the Zn(2+) site. Residues 139 to 198 (VKEAAEERRRDFGEKLTRLRELTGELQRRKAALEGVSRDLQARYKAVLQEYGHEERRIQE) are a coiled coil. The interval 327–347 (MDMSPEEVAPSPRASPAKQRS) is disordered. A phosphoserine mark is found at Ser-330, Ser-337, and Ser-341. 5 NHL repeats span residues 360–403 (LKKM…FNRK), 417–460 (DSFV…YTMD), 461–501 (GHCV…FTVD), 564–607 (GRQI…FPKG), and 608–648 (GGYS…YSYH).

The protein belongs to the TRIM/RBCC family. As to quaternary structure, it self-associates. Interacts with DTNBP1. Interacts with PIAS4/PIASY upon treatment with UVB and TNF-alpha. Interacts with AMBRA1; promoting activation of ULK1 through unanchored 'Lys-63'-linked polyubiquitin chains. Interacts with TICAM1 and TAX1BP1; these interactions target TICAM1 to TAX1BP1-mediated selective autophagic degradation. Ubiquitinated. In terms of processing, phosphorylation at Ser-56 by CHEK2 under oxidative stress, activates the E3 ligase activity and promotes ATG7 ubiquitination leading to positive regulation of the autophagosme assembly. As to expression, ubiquitous. High expression in brain.

It is found in the cytoplasm. The enzyme catalyses S-ubiquitinyl-[E2 ubiquitin-conjugating enzyme]-L-cysteine + [acceptor protein]-L-lysine = [E2 ubiquitin-conjugating enzyme]-L-cysteine + N(6)-ubiquitinyl-[acceptor protein]-L-lysine.. It functions in the pathway protein modification; protein ubiquitination. E3 ubiquitin ligase that plays a role in various biological processes including neural stem cell differentiation, innate immunity, inflammatory resonse and autophagy. Plays a role in virus-triggered induction of IFN-beta and TNF-alpha by mediating the ubiquitination of STING1. Mechanistically, targets STING1 for 'Lys-63'-linked ubiquitination which promotes the interaction of STING1 with TBK1. Regulates bacterial clearance and promotes autophagy in Mycobacterium tuberculosis-infected macrophages. Negatively regulates TLR3/4-mediated innate immune and inflammatory response by triggering the autophagic degradation of TICAM1 in an E3 activity-independent manner. Plays an essential role in oxidative stress induced cell death by inducing loss of transmembrane potential and enhancing mitochondrial reactive oxygen species (ROS) production during oxidative stress conditions. Ubiquitinates XIAP and targets it for proteasomal degradation. Ubiquitinates DTNBP1 (dysbindin) and promotes its degradation. May ubiquitinate BBS2. Ubiquitinates PIAS4/PIASY and promotes its degradation in keratinocytes treated with UVB and TNF-alpha. Also acts as a regulator of autophagy by mediating formation of unanchored 'Lys-63'-linked polyubiquitin chains that activate ULK1: interaction with AMBRA1 is required for ULK1 activation. Positively regulates dendritic branching by promoting ubiquitination and subsequent degradation of the epigenetic factor CDYL. Under metabolic stress and phosphorylation by CHK2, mediates 'Lys-63'-linked ubiquitination of ATG7 at 'Lys-41' to initiate autophagy. The sequence is that of E3 ubiquitin-protein ligase TRIM32 from Mus musculus (Mouse).